The sequence spans 1367 residues: DNA polymerase III PolC-type (1367 aa).

One can recognise an Exonuclease domain in the interval 358–513 (FVVLDFETTG…DDARVTAQVF (156 aa)).

This sequence belongs to the DNA polymerase type-C family. PolC subfamily.

Its subcellular location is the cytoplasm. It catalyses the reaction DNA(n) + a 2'-deoxyribonucleoside 5'-triphosphate = DNA(n+1) + diphosphate. Its function is as follows. Required for replicative DNA synthesis. This DNA polymerase also exhibits 3' to 5' exonuclease activity. This is DNA polymerase III PolC-type from Thermotoga maritima (strain ATCC 43589 / DSM 3109 / JCM 10099 / NBRC 100826 / MSB8).